The chain runs to 829 residues: MKPPGSISRRPTLTGCSLPGASCGPGRCPAGPVPARAPPCRLLLVLLLLPALATSSRPRARGAAAPSAPHWNETAEKTLGVLADEDNTLQQNSSSRNTSYSSAVQKEITLPSRLVYYINQDSESPYHVLDTKARHQQKHNKAVHLAQASFQIEAFGSKFILDLTLNNGLLSSDYVEIHYEDGKQMYSKGGEHCYYHGSIRGVKDSRVALSTCNGLHGMFEDDTFVYMIEPLELTDDEKSTGRPHIIQKTLAGQYSKQMKNLSTDGSDQWPLLPELQWLRRRKRAVNPSRGVFEEMKYLELMIVNDHKTYKKHRSSHAHTNNFAKSVVNLVDSIYKEQLNTRVVLVAVETWTEKDHIDITINPVQMLHDFSKYRQRIKQHADAVHLISRVTFHYKRSSLSYFGGVCSRIRGVGVNEYGLPMAVAQVLSQSLAQNLGIQWEPSSRKPKCECIESWGGCIMEETGVSHSRKFSKCSILEYRDFLQRGGGACLFNRPTKLFEPTECGNGYVEAGEECDCGFHVECYGVCCKKCSLSNGAHCSDGPCCNNTSCLFQSRGYECRDAVNSCDITEYCTGDSGQCPPNLHKQDGYSCNQNQGRCYNGECKTRDNQCQYIWGTKAAGSDKFCYEKLNTEGTEKGNCGKDGDRWIPCSKHDVFCGFLLCTNLTRAPRIGQLQGEIIPTSFYHQGRVIDCSGAHVVLDDDTDVGYVEDGTPCGPSMMCLDRKCLQIQALNMSSCPLDSRGKVCSGHGVCSNEATCICDFTWAGTDCSIRDPVRNPNPPKDEGPKGPSATNLIIGSIAGAILVAAIVLGGTGWGFKNVKKRRFDPTQQGPI.

The signal sequence occupies residues 1 to 55 (MKPPGSISRRPTLTGCSLPGASCGPGRCPAGPVPARAPPCRLLLVLLLLPALATS). Residues 56-283 (SRPRARGAAA…ELQWLRRRKR (228 aa)) constitute a propeptide that is removed on maturation. N-linked (GlcNAc...) asparagine glycans are attached at residues Asn-72, Asn-92, Asn-97, and Asn-260. Topologically, residues 284–789 (AVNPSRGVFE…EGPKGPSATN (506 aa)) are extracellular. The Peptidase M12B domain maps to 296-493 (KYLELMIVND…GGGACLFNRP (198 aa)). 3 cysteine pairs are disulfide-bonded: Cys-405–Cys-488, Cys-447–Cys-472, and Cys-449–Cys-456. Positions 499–585 (PTECGNGYVE…QCPPNLHKQD (87 aa)) constitute a Disintegrin domain. Asn-544 and Asn-545 each carry an N-linked (GlcNAc...) asparagine glycan. Residues Cys-557 and Cys-577 are joined by a disulfide bond. Asn-661 and Asn-729 each carry an N-linked (GlcNAc...) asparagine glycan. In terms of domain architecture, EGF-like spans 729–766 (NMSSCPLDSRGKVCSGHGVCSNEATCICDFTWAGTDCS). Cystine bridges form between Cys-733–Cys-748, Cys-742–Cys-754, and Cys-756–Cys-765. A helical transmembrane segment spans residues 790-810 (LIIGSIAGAILVAAIVLGGTG). The Cytoplasmic segment spans residues 811 to 829 (WGFKNVKKRRFDPTQQGPI).

In terms of assembly, can bind to LGI1 and LGI4. In terms of tissue distribution, brain specific.

It localises to the cell membrane. The protein resides in the secreted. Functionally, may play a role in cell-cell and cell-matrix interactions. This is a non-catalytic metalloprotease-like protein. The protein is Disintegrin and metalloproteinase domain-containing protein 23 (Adam23) of Mus musculus (Mouse).